We begin with the raw amino-acid sequence, 450 residues long: Phosphoglucosamine mutase (450 aa).

The active-site Phosphoserine intermediate is the S101. Mg(2+)-binding residues include S101, D240, D242, and D244. The residue at position 101 (S101) is a Phosphoserine.

It belongs to the phosphohexose mutase family. It depends on Mg(2+) as a cofactor. Post-translationally, activated by phosphorylation. Phosphorylated by StkP in vivo.

It carries out the reaction alpha-D-glucosamine 1-phosphate = D-glucosamine 6-phosphate. In terms of biological role, catalyzes the conversion of glucosamine-6-phosphate to glucosamine-1-phosphate. In Streptococcus pneumoniae (strain ATCC BAA-255 / R6), this protein is Phosphoglucosamine mutase.